A 555-amino-acid polypeptide reads, in one-letter code: NADH-ubiquinone oxidoreductase chain 5 (555 aa).

15 helical membrane passes run 37-57 (LAMTVMIPVGIVTLCVLLYAI), 69-89 (FYIILSVFAIFMTILVVSDNY), 90-110 (IMMFIGWEFVGVISYLLISFW), 133-153 (FFMLALGIFLSYFHAVDFDTL), 155-175 (LAAPYTNTLILNILSLLLLLA), 197-217 (TPVSALLHAATMVCAGVYVLV), 230-250 (LIGICWLGGVTTLVSGLIAIV), 257-275 (VIALSTMSQLSIMVLAIGI), 287-307 (CHAFFKALLFMGAGSVIHSYI), 323-343 (LPFSYTAILIASLSLMAIPGL), 366-388 (ILYYMAVGSATLTSLYSIRVLYL), 406-426 (ENIRMLIPMIILVIYSIFIGF), 454-474 (WYIKLLPLILGLSLSLLLVYI), 494-516 (IYYDQLLNNVIIRKTLIFGGYLN), and 534-554 (RALTYINIGIFLNLLYLFFFY).

Belongs to the complex I subunit 5 family.

It localises to the mitochondrion inner membrane. The catalysed reaction is a ubiquinone + NADH + 5 H(+)(in) = a ubiquinol + NAD(+) + 4 H(+)(out). In terms of biological role, core subunit of the mitochondrial membrane respiratory chain NADH dehydrogenase (Complex I) that is believed to belong to the minimal assembly required for catalysis. Complex I functions in the transfer of electrons from NADH to the respiratory chain. The immediate electron acceptor for the enzyme is believed to be ubiquinone. The polypeptide is NADH-ubiquinone oxidoreductase chain 5 (ND5) (Candida parapsilosis (Yeast)).